Consider the following 294-residue polypeptide: 2-oxoglutaramate amidase (294 aa).

Residues 16–261 enclose the CN hydrolase domain; it reads LDVAAVQVKF…EAVLRATLNF (246 aa). The Proton acceptor role is filled by E55. K129 (proton donor) is an active-site residue. The Nucleophile role is filled by C168.

The protein belongs to the carbon-nitrogen hydrolase superfamily. NIT1/NIT2 family.

The enzyme catalyses 2-oxoglutaramate + H2O = 2-oxoglutarate + NH4(+). The protein operates within alkaloid degradation; nicotine degradation. Its function is as follows. Catalyzes the conversion of 2-oxoglutaramate to 2-oxoglutarate. Together with glutamate dehydrogenase, may form a physiologically relevant enzyme couple, leading to transformation of metabolically inert 2-oxoglutaramate derived from trihydroxypyridine into glutamate, a central compound of nitrogen metabolism. The protein is 2-oxoglutaramate amidase of Paenarthrobacter nicotinovorans (Arthrobacter nicotinovorans).